We begin with the raw amino-acid sequence, 4490 residues long: Dynein axonemal heavy chain 8 (4490 aa).

Position 674 is a phosphoserine (serine 674). 4 AAA regions span residues 1808–2030 (YQNE…VLRT), 2090–2309 (NAVA…KLNL), 2416–2669 (YYPT…IWQG), and 2780–3034 (QFNE…YRRR). Residues 1846-1853 (GPAGTGKT) and 2128-2135 (GPSGSGKT) contribute to the ATP site. Residues 3049–3346 (YKNIYAEKVK…MDLLNDADTC (298 aa)) are stalk. Coiled-coil stretches lie at residues 3072-3164 (DKLM…ALNT), 3290-3354 (LKAN…QAAS), and 3594-3630 (RRVILTEKQELEAERVKLLEDVTFNKRKMKELEDNLL). AAA regions lie at residues 3432-3662 (LVDP…EVSE) and 3877-4091 (ARKY…FIQN).

Belongs to the dynein heavy chain family. As to quaternary structure, consists of at least two heavy chains and a number of intermediate and light chains. In terms of tissue distribution, expressed in spermatozoa (at protein level). Not detected in airway epithelial cells (at protein level).

The protein resides in the cytoplasm. It localises to the cytoskeleton. It is found in the flagellum axoneme. In terms of biological role, force generating protein component of the outer dynein arms (ODAs) in the sperm flagellum. Produces force towards the minus ends of microtubules. Dynein has ATPase activity; the force-producing power stroke is thought to occur on release of ADP. Involved in sperm motility; implicated in sperm flagellar assembly. This chain is Dynein axonemal heavy chain 8, found in Homo sapiens (Human).